The chain runs to 397 residues: DnaJ homolog subfamily A member 4 (397 aa).

One can recognise a J domain in the interval 4–70 (ETQYYDILGV…RDVYDQGGEQ (67 aa)). At Ser-18 the chain carries Phosphoserine. A CR-type zinc finger spans residues 122 to 206 (GVTKKLALQK…CSGAKVIREK (85 aa)). Residues Cys-135, Cys-138, Cys-151, Cys-154, Cys-178, Cys-181, Cys-194, and Cys-197 each coordinate Zn(2+). CXXCXGXG motif repeat units follow at residues 135-142 (CEKCEGVG), 151-158 (CPLCKGRG), 178-185 (CIECKGQG), and 194-201 (CESCSGAK). The residue at position 394 (Cys-394) is a Cysteine methyl ester. A lipid anchor (S-farnesyl cysteine) is attached at Cys-394. A propeptide spans 395–397 (QTA) (removed in mature form).

The protein localises to the membrane. In Homo sapiens (Human), this protein is DnaJ homolog subfamily A member 4 (DNAJA4).